A 284-amino-acid chain; its full sequence is uncharacterized protein (284 aa).

Residues 12–32 (ILFILFVVAFCVYLVPRVAIN) form a helical membrane-spanning segment.

It belongs to the serine esterase family.

It localises to the membrane. This is an uncharacterized protein from Escherichia coli O157:H7.